The following is a 245-amino-acid chain: 7-cyano-7-deazaguanine synthase (245 aa).

19-29 (FSGGQDSATCL) serves as a coordination point for ATP. Zn(2+) contacts are provided by C207, C222, C225, and C228.

It belongs to the QueC family. The cofactor is Zn(2+).

The enzyme catalyses 7-carboxy-7-deazaguanine + NH4(+) + ATP = 7-cyano-7-deazaguanine + ADP + phosphate + H2O + H(+). It functions in the pathway purine metabolism; 7-cyano-7-deazaguanine biosynthesis. Its function is as follows. Catalyzes the ATP-dependent conversion of 7-carboxy-7-deazaguanine (CDG) to 7-cyano-7-deazaguanine (preQ(0)). The sequence is that of 7-cyano-7-deazaguanine synthase from Gluconacetobacter diazotrophicus (strain ATCC 49037 / DSM 5601 / CCUG 37298 / CIP 103539 / LMG 7603 / PAl5).